The following is a 569-amino-acid chain: Formate--tetrahydrofolate ligase (569 aa).

An ATP-binding site is contributed by 68–75 (TPAGEGKT).

The protein belongs to the formate--tetrahydrofolate ligase family.

The enzyme catalyses (6S)-5,6,7,8-tetrahydrofolate + formate + ATP = (6R)-10-formyltetrahydrofolate + ADP + phosphate. Its pathway is one-carbon metabolism; tetrahydrofolate interconversion. The polypeptide is Formate--tetrahydrofolate ligase (Psychrobacter sp. (strain PRwf-1)).